The sequence spans 383 residues: Probable cell wall hydrolase LytN (383 aa).

Residues 1 to 49 (MFVYYCKECFIMNKQQSKVRYSIRKVSIGILSISIGMFLALGMSNKAYA) form the signal peptide. Residues 175-219 (QIYTVKKGDTLSAIALKYKTTVSNIQNTNNIANPNLIFIGQKLKV) enclose the LysM domain. Positions 241–378 (NSSTLNYLKT…NYENDMIFIR (138 aa)) constitute a Peptidase C51 domain.

Its subcellular location is the secreted. Probably involved in peptidoglycan hydrolysis. The polypeptide is Probable cell wall hydrolase LytN (lytN) (Staphylococcus aureus (strain NCTC 8325 / PS 47)).